A 101-amino-acid chain; its full sequence is Small ribosomal subunit protein uS14 (101 aa).

Belongs to the universal ribosomal protein uS14 family. Part of the 30S ribosomal subunit. Contacts proteins S3 and S10.

Functionally, binds 16S rRNA, required for the assembly of 30S particles and may also be responsible for determining the conformation of the 16S rRNA at the A site. The protein is Small ribosomal subunit protein uS14 of Pseudomonas syringae pv. tomato (strain ATCC BAA-871 / DC3000).